The chain runs to 345 residues: RNA pseudouridine synthase 1 (345 aa).

Residue Asp-134 is part of the active site.

The protein belongs to the pseudouridine synthase RluA family.

It carries out the reaction a uridine in RNA = a pseudouridine in RNA. This Oryza sativa subsp. japonica (Rice) protein is RNA pseudouridine synthase 1.